A 297-amino-acid polypeptide reads, in one-letter code: CASP-like protein 4A2 (297 aa).

Over residues 1-20 (MKMKRTASSNSEAQSYNESP) the composition is skewed to polar residues. A disordered region spans residues 1-135 (MKMKRTASSN…PINGEESTRT (135 aa)). Residues 1–149 (MKMKRTASSN…ARGDDLVSLT (149 aa)) lie on the Cytoplasmic side of the membrane. Residues 69-83 (LPSPIPPPPPQFPPP) show a composition bias toward pro residues. A helical transmembrane segment spans residues 150-170 (ALGFRITEVILCVISFSIMAA). Over 171 to 191 (DKTQGWSGDSYDRYKEYRYCL) the chain is Extracellular. The chain crosses the membrane as a helical span at residues 192–212 (AVNVIAFVYSAFEACDAACYI). Topologically, residues 213–225 (AKESYMINCGFHD) are cytoplasmic. A helical transmembrane segment spans residues 226-246 (LFVFSMDQLLAYLLMSASSCA). Residues 247–265 (ATRVDDWVSNWGKDEFTQM) lie on the Extracellular side of the membrane. A helical transmembrane segment spans residues 266–286 (ATASIAVSFLAFGAFAVSALI). The Cytoplasmic segment spans residues 287–297 (SSYRLFTHASS).

The protein belongs to the Casparian strip membrane proteins (CASP) family. As to quaternary structure, homodimer and heterodimers.

The protein localises to the cell membrane. The polypeptide is CASP-like protein 4A2 (Arabidopsis thaliana (Mouse-ear cress)).